A 649-amino-acid chain; its full sequence is 1-deoxy-D-xylulose-5-phosphate synthase 1 (649 aa).

Thiamine diphosphate contacts are provided by residues His73 and 113–115 (SHA). Residue Asp144 participates in Mg(2+) binding. Thiamine diphosphate-binding positions include 145–146 (GA), Asn174, Tyr285, and Glu367. Position 174 (Asn174) interacts with Mg(2+). Residues 623–649 (LLPGTGTRPGAQEYRPRMPLTDWSEPA) are disordered.

It belongs to the transketolase family. DXPS subfamily. Homodimer. Requires Mg(2+) as cofactor. The cofactor is thiamine diphosphate.

It carries out the reaction D-glyceraldehyde 3-phosphate + pyruvate + H(+) = 1-deoxy-D-xylulose 5-phosphate + CO2. The protein operates within metabolic intermediate biosynthesis; 1-deoxy-D-xylulose 5-phosphate biosynthesis; 1-deoxy-D-xylulose 5-phosphate from D-glyceraldehyde 3-phosphate and pyruvate: step 1/1. Functionally, catalyzes the acyloin condensation reaction between C atoms 2 and 3 of pyruvate and glyceraldehyde 3-phosphate to yield 1-deoxy-D-xylulose-5-phosphate (DXP). The polypeptide is 1-deoxy-D-xylulose-5-phosphate synthase 1 (Kitasatospora griseola (Streptomyces griseolosporeus)).